A 939-amino-acid polypeptide reads, in one-letter code: Isoleucine--tRNA ligase (939 aa).

Positions 57 to 67 match the 'HIGH' region motif; the sequence is PYANGHIHIGH. E563 contacts L-isoleucyl-5'-AMP. Positions 604–608 match the 'KMSKS' region motif; it reads KMSKS. ATP is bound at residue K607. The Zn(2+) site is built by C903, C906, C921, and C924.

It belongs to the class-I aminoacyl-tRNA synthetase family. IleS type 1 subfamily. In terms of assembly, monomer. It depends on Zn(2+) as a cofactor.

The protein resides in the cytoplasm. The catalysed reaction is tRNA(Ile) + L-isoleucine + ATP = L-isoleucyl-tRNA(Ile) + AMP + diphosphate. Catalyzes the attachment of isoleucine to tRNA(Ile). As IleRS can inadvertently accommodate and process structurally similar amino acids such as valine, to avoid such errors it has two additional distinct tRNA(Ile)-dependent editing activities. One activity is designated as 'pretransfer' editing and involves the hydrolysis of activated Val-AMP. The other activity is designated 'posttransfer' editing and involves deacylation of mischarged Val-tRNA(Ile). This chain is Isoleucine--tRNA ligase, found in Sulfurihydrogenibium sp. (strain YO3AOP1).